Reading from the N-terminus, the 745-residue chain is Phosphate transporter PHO1 homolog 4 (745 aa).

Residues 1–290 (MRFGKEFVSQ…KRNAAKLYME (290 aa)) form the SPX domain. Topologically, residues 1–342 (MRFGKEFVSQ…KINKERHLIT (342 aa)) are cytoplasmic. A helical membrane pass occupies residues 343-363 (FSTGFFFGCGISLIVALGLII). The Extracellular segment spans residues 364 to 383 (HARNIMGTPGQRTYMETMFP). A helical membrane pass occupies residues 384–404 (LYRFFGFVVLHMDVYAANIYF). The Cytoplasmic segment spans residues 405 to 427 (WRRYRVNYSFIFGFKQGTELGYR). The chain crosses the membrane as a helical span at residues 428 to 448 (HVLLLSFGLGTLSLCAVLLNL). The Extracellular segment spans residues 449 to 464 (DMEMDAQTKDYRLVTE). A helical membrane pass occupies residues 465 to 485 (LIPLFLLVLVIIIVLCPFNIL). The Cytoplasmic portion of the chain corresponds to 486–615 (YRSSRFFFLS…YTLNRGSNWN (130 aa)). The 195-residue stretch at 550–744 (TSNIGFRTFY…NYEEDGDHHN (195 aa)) folds into the EXS domain. A helical membrane pass occupies residues 616–636 (ITAWVFSGVATFYGTYWDIVL). Over 637–660 (DWGLLQRGCKNSFLRDKLLVPHKT) the chain is Extracellular. Residues 661 to 681 (VYYAAMVLNVLLRLVWLQTVL) traverse the membrane as a helical segment. The Cytoplasmic segment spans residues 682-745 (DLKFSFLHRE…YEEDGDHHNN (64 aa)).

Belongs to the SYG1 (TC 2.A.94) family. In terms of tissue distribution, expressed in root epidermis and cortex, leaf hydathodes, pollen grains and stigma apex.

The protein resides in the cell membrane. May transport inorganic phosphate (Pi). In Arabidopsis thaliana (Mouse-ear cress), this protein is Phosphate transporter PHO1 homolog 4 (PHO1-H4).